The following is a 60-amino-acid chain: Large ribosomal subunit protein uL30 (60 aa).

It belongs to the universal ribosomal protein uL30 family. Part of the 50S ribosomal subunit.

This Shewanella baltica (strain OS223) protein is Large ribosomal subunit protein uL30.